The chain runs to 341 residues: HTH-type transcriptional repressor PurR (341 aa).

Positions alanine 2 to valine 56 constitute an HTH lacI-type domain. The H-T-H motif DNA-binding region spans isoleucine 4–asparagine 23. Residues serine 48–valine 56 mediate DNA binding. Tyrosine 73, arginine 190, threonine 192, phenylalanine 221, and aspartate 275 together coordinate hypoxanthine.

Homodimer.

It participates in purine metabolism; purine nucleotide biosynthesis [regulation]. Functionally, is the main repressor of the genes involved in the de novo synthesis of purine nucleotides, regulating purB, purC, purEK, purF, purHD, purL, purMN and guaBA expression. PurR is allosterically activated to bind its cognate DNA by binding the purine corepressors, hypoxanthine or guanine, thereby effecting transcription repression. This is HTH-type transcriptional repressor PurR from Salmonella typhi.